A 150-amino-acid polypeptide reads, in one-letter code: 5-hydroxytryptamine receptor 1B (150 aa).

The Extracellular segment spans residues 1 to 83 (VEARSRILKQ…AARERKATKT (83 aa)). Over residues 27 to 40 (DSPGSTSSVTSINS) the composition is skewed to polar residues. The tract at residues 27-50 (DSPGSTSSVTSINSRAPDLPSESG) is disordered. The helical transmembrane segment at 84 to 105 (LGIILGAFIVCWLPFFIISLAM) threads the bilayer. Over 106 to 115 (PICKDACWFH) the chain is Cytoplasmic. A helical transmembrane segment spans residues 116 to 138 (LAIFDFFTWLGYLNSLINPIIYT). The NPxxY motif; important for ligand-induced conformation changes and signaling signature appears at 133-137 (NPIIY). At 139-150 (MFNEDFKQAFHK) the chain is on the extracellular side.

Belongs to the G-protein coupled receptor 1 family. As to quaternary structure, homodimer. Heterodimer with HTR1D. Phosphorylated. Desensitization of the receptor may be mediated by its phosphorylation. In terms of processing, palmitoylated.

Its subcellular location is the cell membrane. In terms of biological role, G-protein coupled receptor for 5-hydroxytryptamine (serotonin). Also functions as a receptor for ergot alkaloid derivatives, various anxiolytic and antidepressant drugs and other psychoactive substances, such as lysergic acid diethylamide (LSD). Ligand binding causes a conformation change that triggers signaling via guanine nucleotide-binding proteins (G proteins) and modulates the activity of downstream effectors, such as adenylate cyclase. HTR1B is coupled to G(i)/G(o) G alpha proteins and mediates inhibitory neurotransmission by inhibiting adenylate cyclase activity. Arrestin family members inhibit signaling via G proteins and mediate activation of alternative signaling pathways. Regulates the release of 5-hydroxytryptamine, dopamine and acetylcholine in the brain, and thereby affects neural activity, nociceptive processing, pain perception, mood and behavior. Besides, plays a role in vasoconstriction of cerebral arteries. The polypeptide is 5-hydroxytryptamine receptor 1B (HTR1B) (Sus scrofa (Pig)).